The primary structure comprises 509 residues: Histidine ammonia-lyase (509 aa).

The segment at residues 144-146 (ASG) is a cross-link (5-imidazolinone (Ala-Gly)). At Ser-145 the chain carries 2,3-didehydroalanine (Ser).

This sequence belongs to the PAL/histidase family. In terms of processing, contains an active site 4-methylidene-imidazol-5-one (MIO), which is formed autocatalytically by cyclization and dehydration of residues Ala-Ser-Gly.

The protein localises to the cytoplasm. The enzyme catalyses L-histidine = trans-urocanate + NH4(+). It functions in the pathway amino-acid degradation; L-histidine degradation into L-glutamate; N-formimidoyl-L-glutamate from L-histidine: step 1/3. This is Histidine ammonia-lyase from Rhodospirillum centenum (strain ATCC 51521 / SW).